The primary structure comprises 394 residues: Nuclear hormone receptor family member nhr-103 (394 aa).

Residues 8 to 83 (SGPCEICGQK…VGMDSKKFQT (76 aa)) constitute a DNA-binding region (nuclear receptor). The NR C4-type zinc finger occupies 11–31 (CEICGQKTSGRHFGVLSCRSC). The NR C4-type; degenerate zinc finger occupies 47–66 (QCVKGTCKIFEDGKFNCKQC). The 269-residue stretch at 126 to 394 (YLVDMAKNLL…FSHPEMFETT (269 aa)) folds into the NR LBD domain.

The protein belongs to the nuclear hormone receptor family.

It is found in the nucleus. In terms of biological role, orphan nuclear receptor. In Caenorhabditis elegans, this protein is Nuclear hormone receptor family member nhr-103 (nhr-103).